The following is a 403-amino-acid chain: S-adenosylmethionine synthase (403 aa).

Histidine 14 serves as a coordination point for ATP. Aspartate 16 is a binding site for Mg(2+). Residue glutamate 42 participates in K(+) binding. Residues glutamate 55 and glutamine 99 each contribute to the L-methionine site. Residues glutamine 99 to histidine 109 form a flexible loop region. Residues aspartate 180–lysine 182, arginine 250–phenylalanine 251, aspartate 259, arginine 265–lysine 266, alanine 282, and lysine 286 each bind ATP. Position 259 (aspartate 259) interacts with L-methionine. Lysine 290 contributes to the L-methionine binding site.

The protein belongs to the AdoMet synthase family. Homotetramer; dimer of dimers. Mg(2+) serves as cofactor. Requires K(+) as cofactor.

It is found in the cytoplasm. The enzyme catalyses L-methionine + ATP + H2O = S-adenosyl-L-methionine + phosphate + diphosphate. It participates in amino-acid biosynthesis; S-adenosyl-L-methionine biosynthesis; S-adenosyl-L-methionine from L-methionine: step 1/1. In terms of biological role, catalyzes the formation of S-adenosylmethionine (AdoMet) from methionine and ATP. The overall synthetic reaction is composed of two sequential steps, AdoMet formation and the subsequent tripolyphosphate hydrolysis which occurs prior to release of AdoMet from the enzyme. The protein is S-adenosylmethionine synthase of Deinococcus deserti (strain DSM 17065 / CIP 109153 / LMG 22923 / VCD115).